A 230-amino-acid polypeptide reads, in one-letter code: Demethylmenaquinone methyltransferase (230 aa).

S-adenosyl-L-methionine is bound by residues threonine 62, aspartate 80, aspartate 100–glycine 101, and serine 117.

It belongs to the class I-like SAM-binding methyltransferase superfamily. MenG/UbiE family.

It carries out the reaction a 2-demethylmenaquinol + S-adenosyl-L-methionine = a menaquinol + S-adenosyl-L-homocysteine + H(+). It functions in the pathway quinol/quinone metabolism; menaquinone biosynthesis; menaquinol from 1,4-dihydroxy-2-naphthoate: step 2/2. Functionally, methyltransferase required for the conversion of demethylmenaquinol (DMKH2) to menaquinol (MKH2). This Corynebacterium glutamicum (strain ATCC 13032 / DSM 20300 / JCM 1318 / BCRC 11384 / CCUG 27702 / LMG 3730 / NBRC 12168 / NCIMB 10025 / NRRL B-2784 / 534) protein is Demethylmenaquinone methyltransferase.